Consider the following 906-residue polypeptide: MISSKVAPGEEEQGESPSKVELGEAEEQREAPLEGQLEAVPLDEAGPSWTTGPPLERLPPLGQEAPPPRRCHTNCLEAPLSRGFQRFGATVGANPWLFLLGPALLTASLGTGLIFLPKEKENLEEQYTPIGSPAKAERRFVQGHFSTNDTYRFSASRTSSETNFASILVVSLANSLLEPEIFKEVSKLDQAVQALKVVQENGTQILYQEVCAKYKTLCVPPNPLLFSWQHNSSLNLSDLTFPIHNTPTQLIYLAGFFGGNVLGQMTGKSQRLVESRAMRLLYYLKTEDPEDSERSQAWLTHFLDHFNDMKSSLTLEEIEVVYFSSLSRQLEFEATSKTVIPLFHLAYILIILFAVVSCSRLDCIRNKMCVAVFGVFSVAMSVVSGFGLMLHLGVPFVIIVANSPFLILGVGVDDMFIMISAWQKTSLSESIRERLSNSYSKVAVSITITTITNVLAFYTGITSSFRSVQYFCIYTGTTLLFCYFYSITCFGAVMALDGKREVAWSRWLEKPDQKYSSLKKSCCVPFGSLIDKHGEDNHPMNLFFRDYFGPFLTTSKAKFIVVLLYIFYIISSIYGCFQVQEGLDLRNLASDDSYITPYFNVEEDYFSDYGPRVMVIVTESVNYWDNDVRQKLDKCMTQFEENEYVDKNLTEFWLEAYMQYMNSSGNNPNDKNTFMNNIAGFLQFFPIFTYDINISSSNEITSSRGFIQIVDVSSSSNKKRMLLKLRSIAENCEVPLMVYNQAFIYFDQYAAIIENTVRNVMIASTAMFIVSLLLIPHPVCSLWVTFAIASVIVGVTGFMAFWNVNLDSISMINLVICIGFSFDFSAHISYAFVSSTEPSVNKKSIEALYLLGYPVLQSAISTIIGVCVLSAAKAYIFRTFFKIMFLVMFFGAAHGLIFIPVFLTFF.

The segment at 1–70 (MISSKVAPGE…LGQEAPPPRR (70 aa)) is disordered. 2 N-linked (GlcNAc...) asparagine glycosylation sites follow: asparagine 148 and asparagine 235. The next 11 membrane-spanning stretches (helical) occupy residues 338–358 (TVIP…VVSC), 370–390 (VAVF…GLML), 392–412 (LGVP…GVGV), 442–462 (VAVS…TGIT), 476–496 (GTTL…VMAL), 559–579 (FIVV…CFQV), 760–780 (VMIA…HPVC), 782–802 (LWVT…MAFW), 814–834 (LVIC…AFVS), 848–868 (LYLL…GVCV), and 883–903 (IMFL…PVFL). Residues 339-496 (VIPLFHLAYI…ITCFGAVMAL (158 aa)) form the SSD domain.

Belongs to the patched family. As to expression, expressed in germ cells of the testis (at protein level).

It localises to the cell projection. Its subcellular location is the cilium. The protein resides in the flagellum membrane. The protein localises to the endoplasmic reticulum membrane. Functionally, may play a role in sperm development or sperm function. However, does not appear to have an essential role in spermatogenesis or male fertility. In Mus musculus (Mouse), this protein is Patched domain-containing protein 3 (Ptchd3).